The chain runs to 345 residues: Heat-inducible transcription repressor HrcA (345 aa).

The protein belongs to the HrcA family.

Functionally, negative regulator of class I heat shock genes (grpE-dnaK-dnaJ and groELS operons). Prevents heat-shock induction of these operons. The sequence is that of Heat-inducible transcription repressor HrcA from Dehalococcoides mccartyi (strain ATCC BAA-2100 / JCM 16839 / KCTC 5957 / BAV1).